We begin with the raw amino-acid sequence, 61 residues long: LQVLTEEVGSIDSPVGEHQQPGGESMRLPEHFRFKRXSHLSLCRWCCNCCHNKGXGFCCKF.

Positions 1–24 (LQVLTEEVGSIDSPVGEHQQPGGE) are disordered. Residues 1 to 34 (LQVLTEEVGSIDSPVGEHQQPGGESMRLPEHFRF) constitute a propeptide that is removed on maturation. 4 cysteine pairs are disulfide-bonded: Cys-43/Cys-59, Cys-46/Cys-49, Cys-47/Xaa-55, and Cys-50/Cys-58.

This sequence belongs to the hepcidin family.

The protein resides in the secreted. Its function is as follows. Seems to act as a signaling molecule involved in the maintenance of iron homeostasis. Seems to be required in conjunction with HFE to regulate both intestinal iron absorption and iron storage in macrophages. May also have antimicrobial activity. In Oncorhynchus mykiss (Rainbow trout), this protein is Hepcidin (hamp).